A 452-amino-acid polypeptide reads, in one-letter code: Probable phosphoglucosamine mutase (452 aa).

Residue S96 is the Phosphoserine intermediate of the active site. Mg(2+)-binding residues include S96, D233, D235, and D237. A Phosphoserine modification is found at S96.

The protein belongs to the phosphohexose mutase family. Mg(2+) serves as cofactor. Post-translationally, activated by phosphorylation.

It catalyses the reaction alpha-D-glucosamine 1-phosphate = D-glucosamine 6-phosphate. In terms of biological role, catalyzes the conversion of glucosamine-6-phosphate to glucosamine-1-phosphate. The polypeptide is Probable phosphoglucosamine mutase (Pyrococcus furiosus (strain ATCC 43587 / DSM 3638 / JCM 8422 / Vc1)).